The primary structure comprises 150 residues: uncharacterized protein (150 aa).

The segment at 75-150 is disordered; it reads RAPQNPPPPG…LLDAVAAAET (76 aa). The segment covering 86–103 has biased composition (low complexity); the sequence is QRNLPLRRLPALPAAPEA.

This is an uncharacterized protein from Homo sapiens (Human).